A 389-amino-acid polypeptide reads, in one-letter code: Acetylornithine deacetylase (389 aa).

Zn(2+) is bound at residue histidine 85. Residue aspartate 87 is part of the active site. Aspartate 117 contributes to the Zn(2+) binding site. Glutamate 149 is a catalytic residue. The Zn(2+) site is built by glutamate 150, glutamate 174, and histidine 360.

It belongs to the peptidase M20A family. ArgE subfamily. In terms of assembly, homodimer. Zn(2+) is required as a cofactor. It depends on Co(2+) as a cofactor. Glutathione serves as cofactor.

Its subcellular location is the cytoplasm. It catalyses the reaction N(2)-acetyl-L-ornithine + H2O = L-ornithine + acetate. It functions in the pathway amino-acid biosynthesis; L-arginine biosynthesis; L-ornithine from N(2)-acetyl-L-ornithine (linear): step 1/1. Functionally, catalyzes the hydrolysis of the amide bond of N(2)-acetylated L-amino acids. Cleaves the acetyl group from N-acetyl-L-ornithine to form L-ornithine, an intermediate in L-arginine biosynthesis pathway, and a branchpoint in the synthesis of polyamines. This Yersinia pseudotuberculosis serotype O:1b (strain IP 31758) protein is Acetylornithine deacetylase.